The primary structure comprises 153 residues: Large ribosomal subunit protein uL30 (153 aa).

It belongs to the universal ribosomal protein uL30 family. Part of the 50S ribosomal subunit.

The chain is Large ribosomal subunit protein uL30 from Methanoculleus marisnigri (strain ATCC 35101 / DSM 1498 / JR1).